The following is a 314-amino-acid chain: Bifunctional pinoresinol-lariciresinol reductase 3 (314 aa).

NADP(+)-binding positions include glycine 11–glycine 17, arginine 36, and lysine 45. Lysine 138 (proton acceptor) is an active-site residue. Arginine 142 provides a ligand contact to NADP(+). A substrate-binding site is contributed by histidine 272.

It belongs to the NmrA-type oxidoreductase family. Isoflavone reductase subfamily. In terms of assembly, dimer.

The enzyme catalyses (-)-lariciresinol + NADP(+) = (-)-pinoresinol + NADPH + H(+). It carries out the reaction (+)-secoisolariciresinol + NADP(+) = (-)-lariciresinol + NADPH + H(+). Its function is as follows. Reductase involved in lignan biosynthesis. Catalyzes the enantioselective sequential conversion of (-)-pinoresinol into (-)-lariciresinol and of (-)-lariciresinol into (+)-secoisolariciresinol. Abstracts the 4R-hydride from the NADPH cofactor during catalysis. In Thuja plicata (Western red-cedar), this protein is Bifunctional pinoresinol-lariciresinol reductase 3.